A 179-amino-acid polypeptide reads, in one-letter code: Large ribosomal subunit protein uL5 (179 aa).

The protein belongs to the universal ribosomal protein uL5 family. Part of the 50S ribosomal subunit; part of the 5S rRNA/L5/L18/L25 subcomplex. Contacts the 5S rRNA and the P site tRNA. Forms a bridge to the 30S subunit in the 70S ribosome.

This is one of the proteins that bind and probably mediate the attachment of the 5S RNA into the large ribosomal subunit, where it forms part of the central protuberance. In the 70S ribosome it contacts protein S13 of the 30S subunit (bridge B1b), connecting the 2 subunits; this bridge is implicated in subunit movement. Contacts the P site tRNA; the 5S rRNA and some of its associated proteins might help stabilize positioning of ribosome-bound tRNAs. The polypeptide is Large ribosomal subunit protein uL5 (Desulfovibrio desulfuricans (strain ATCC 27774 / DSM 6949 / MB)).